The following is a 353-amino-acid chain: Rhodopsin (353 aa).

Topologically, residues 1 to 36 (MNGTEGPYFYIPMLNTTGIVRSPYEYPQYYLVNPAA) are extracellular. Asn2 and Asn15 each carry an N-linked (GlcNAc...) asparagine glycan. The helical transmembrane segment at 37–61 (YAALCAYMFLLILLGFPINFLTLYV) threads the bilayer. Topologically, residues 62–73 (TIEHKKLRTPLN) are cytoplasmic. A helical transmembrane segment spans residues 74-96 (YILLNLAVANLFMVFGGFTTTMY). Residues 97-110 (TSMHGYFVLGRLGC) are Extracellular-facing. Cys110 and Cys187 are disulfide-bonded. Residues 111–133 (NLEGFFATLGGEIGLWSLVVLAV) form a helical membrane-spanning segment. Residues 134–136 (ERW) carry the 'Ionic lock' involved in activated form stabilization motif. At 134–152 (ERWMVVCKPISNFRFTENH) the chain is on the cytoplasmic side. Residues 153–173 (AIMGLGFTWFAASACAVPPLV) form a helical membrane-spanning segment. The Extracellular portion of the chain corresponds to 174–202 (GWSRYIPEGMQCSCGVDYYTRAEGFNNES). A glycan (N-linked (GlcNAc...) asparagine) is linked at Asn200. A helical transmembrane segment spans residues 203–224 (FVVYMFVCHFLIPLIVVFFCYG). The Cytoplasmic segment spans residues 225-252 (RLLCAVKEAAAAQQESETTQRAEREVTR). The chain crosses the membrane as a helical span at residues 253 to 274 (MVVIMVIAFLICWCPYAGVAWY). Residues 275-286 (IFSNQGSEFGPL) lie on the Extracellular side of the membrane. A helical membrane pass occupies residues 287–308 (FMTIPAFFAKSSSIYNPLIYIF). Lys296 carries the post-translational modification N6-(retinylidene)lysine. Over 309 to 353 (MNKQFRHCMITTLCCGKNPFEEEEGSTTTSKTEASSASSSSVSPA) the chain is Cytoplasmic. S-palmitoyl cysteine attachment occurs at residues Cys322 and Cys323. Positions 329-353 (EEEEGSTTTSKTEASSASSSSVSPA) are disordered. Low complexity predominate over residues 334 to 353 (STTTSKTEASSASSSSVSPA).

Belongs to the G-protein coupled receptor 1 family. Opsin subfamily. Post-translationally, phosphorylated on some or all of the serine and threonine residues present in the C-terminal region. In terms of processing, contains one covalently linked retinal chromophore.

It is found in the membrane. The protein localises to the cell projection. The protein resides in the cilium. It localises to the photoreceptor outer segment. Its function is as follows. Photoreceptor required for image-forming vision at low light intensity. While most salt water fish species use retinal as chromophore, most freshwater fish use 3-dehydroretinal, or a mixture of retinal and 3-dehydroretinal. Light-induced isomerization of 11-cis to all-trans retinal triggers a conformational change that activates signaling via G-proteins. Subsequent receptor phosphorylation mediates displacement of the bound G-protein alpha subunit by arrestin and terminates signaling. This chain is Rhodopsin (rho), found in Solea solea (Common sole).